A 323-amino-acid polypeptide reads, in one-letter code: NADH-ubiquinone oxidoreductase chain 1 (323 aa).

Helical transmembrane passes span 4–24 (LFTV…VAFL), 73–93 (YLFF…WNLM), 106–126 (LLLV…SGWA), 150–170 (LALI…TYIM), 175–195 (FSWF…STLA), 226–246 (LFFI…VVIF), 256–276 (LFPL…FLFL), and 303–323 (IGAL…LPLF).

It belongs to the complex I subunit 1 family.

The protein resides in the mitochondrion inner membrane. The catalysed reaction is a ubiquinone + NADH + 5 H(+)(in) = a ubiquinol + NAD(+) + 4 H(+)(out). In terms of biological role, core subunit of the mitochondrial membrane respiratory chain NADH dehydrogenase (Complex I) that is believed to belong to the minimal assembly required for catalysis. Complex I functions in the transfer of electrons from NADH to the respiratory chain. The immediate electron acceptor for the enzyme is believed to be ubiquinone. This chain is NADH-ubiquinone oxidoreductase chain 1 (ND1), found in Paracentrotus lividus (Common sea urchin).